We begin with the raw amino-acid sequence, 607 residues long: Type 3 secretion system secretin (607 aa).

An N-terminal signal peptide occupies residues 1-33; sequence MAPACTTAHRRRAPLAAVLMLSLLPLLSPHADA. The tract at residues 277 to 332 is disordered; that stretch reads ASSSDRVPVSPPLPGSGAAAAAGSPASVWPELSKGRRDESNPIDAGGGAELASDAP. The segment covering 291–306 has biased composition (low complexity); the sequence is GSGAAAAAGSPASVWP.

The protein belongs to the bacterial secretin family. T3SS SctC subfamily. In terms of assembly, the core secretion machinery of the T3SS is composed of approximately 20 different proteins, including cytoplasmic components, a base, an export apparatus and a needle. This subunit is part of the base, which anchors the injectisome in the bacterial cell envelope. Forms a stable homooligomeric complex.

It localises to the cell outer membrane. Functionally, component of the type III secretion system (T3SS), also called injectisome, which is used to inject bacterial effector proteins into eukaryotic host cells. Forms a ring-shaped multimeric structure with an apparent central pore in the outer membrane. Necessary for both basic pathogenicity and the induction of the hypersensitive response in resistant plants. The sequence is that of Type 3 secretion system secretin from Xanthomonas euvesicatoria.